Reading from the N-terminus, the 1178-residue chain is DNA-directed RNA polymerase I subunit 2 (1178 aa).

The segment at 1097-1137 (CSLCGSLLTSSVVNVQQKKLIQEIGKLPPGRTPKKVTCYSC) adopts a C4-type zinc-finger fold.

Belongs to the RNA polymerase beta chain family. As to quaternary structure, component of the RNA polymerase I (Pol I) complex consisting of at least 13 subunits.

It localises to the nucleus. The catalysed reaction is RNA(n) + a ribonucleoside 5'-triphosphate = RNA(n+1) + diphosphate. Its function is as follows. DNA-dependent RNA polymerase catalyzes the transcription of DNA into RNA using the four ribonucleoside triphosphates as substrates. Second largest core component of RNA polymerase I which synthesizes ribosomal RNA precursors. Proposed to contribute to the polymerase catalytic activity and forms the polymerase active center together with the largest subunit. Pol I is composed of mobile elements and NRPA2 is part of the core element with the central large cleft and probably a clamp element that moves to open and close the cleft. In terms of biological role, essential for the completion of the three rounds of mitosis in female megaspores required for the development of mature gametophytes. This chain is DNA-directed RNA polymerase I subunit 2, found in Arabidopsis thaliana (Mouse-ear cress).